We begin with the raw amino-acid sequence, 138 residues long: Thyrotropin subunit beta (138 aa).

Residues 1–20 (MTATFLMSMIFGLACGQAMS) form the signal peptide. Disulfide bonds link cysteine 22–cysteine 72, cysteine 36–cysteine 87, cysteine 39–cysteine 125, cysteine 47–cysteine 103, cysteine 51–cysteine 105, and cysteine 108–cysteine 115. Asparagine 43 carries N-linked (GlcNAc...) asparagine glycosylation. Positions 133–138 (MVGFSI) are excised as a propeptide.

It belongs to the glycoprotein hormones subunit beta family. In terms of assembly, heterodimer of a common alpha chain and a unique beta chain which confers biological specificity to thyrotropin, lutropin, follitropin and gonadotropin.

It is found in the secreted. Its function is as follows. Indispensable for the control of thyroid structure and metabolism. The polypeptide is Thyrotropin subunit beta (TSHB) (Bos taurus (Bovine)).